Consider the following 269-residue polypeptide: Surfeit locus protein 4 (269 aa).

The next 5 helical transmembrane spans lie at 64 to 84 (FLAT…CVLI), 92 to 112 (YACF…SILW), 179 to 199 (FFSI…AIGF), 203 to 223 (LAAL…NAFW), and 242 to 262 (TTSV…GVSM). The Di-lysine motif signature appears at 266-269 (KKEW).

The protein belongs to the SURF4 family.

Its subcellular location is the endoplasmic reticulum membrane. The protein resides in the endoplasmic reticulum-Golgi intermediate compartment membrane. The protein localises to the golgi apparatus membrane. In terms of biological role, endoplasmic reticulum cargo receptor that mediates the export of lipoproteins by recruiting cargos into COPII vesicles to facilitate their secretion. Acts as a cargo receptor for lipoproteins bearing both APOB and APOA1, thereby regulating lipoprotein delivery and the maintenance of lipid homeostasis. The chain is Surfeit locus protein 4 from Takifugu rubripes (Japanese pufferfish).